The primary structure comprises 274 residues: Diaminopimelate epimerase (274 aa).

Positions 11, 44, and 64 each coordinate substrate. Cys73 acts as the Proton donor in catalysis. Residues 74 to 75 (GN), Asn157, Asn190, and 208 to 209 (ER) each bind substrate. Cys217 acts as the Proton acceptor in catalysis. 218–219 (GS) serves as a coordination point for substrate.

Belongs to the diaminopimelate epimerase family. In terms of assembly, homodimer.

It localises to the cytoplasm. The catalysed reaction is (2S,6S)-2,6-diaminopimelate = meso-2,6-diaminopimelate. Its pathway is amino-acid biosynthesis; L-lysine biosynthesis via DAP pathway; DL-2,6-diaminopimelate from LL-2,6-diaminopimelate: step 1/1. Catalyzes the stereoinversion of LL-2,6-diaminopimelate (L,L-DAP) to meso-diaminopimelate (meso-DAP), a precursor of L-lysine and an essential component of the bacterial peptidoglycan. In Enterobacter sp. (strain 638), this protein is Diaminopimelate epimerase.